The chain runs to 487 residues: WAS/WASL-interacting protein family member 1 (487 aa).

Positions 1 to 14 (MPVPPPPAPPPPPT) are enriched in pro residues. Positions 1–487 (MPVPPPPAPP…GAPPLPPIPR (487 aa)) are disordered. The span at 21-31 (EKPSLNKTEQA) shows a compositional bias: polar residues. The 18-residue stretch at 32–49 (GRNALLSDISKGKKLKKT) folds into the WH2 domain. Position 33 is an asymmetric dimethylarginine (arginine 33). Residues 45-48 (KLKK) are binds actin. Gly residues predominate over residues 64–100 (GAGGGYGGGSGGGGGGGSSGGGGNFGGGGPPGLGGLF). Omega-N-methylarginine is present on residues arginine 121 and arginine 130. Positions 136-147 (PFSSPSGPGRFP) are enriched in low complexity. Serine 138 carries the phosphoserine modification. 2 stretches are compositionally biased toward pro residues: residues 157-170 (PPEPPRNRMPPPRP) and 178-190 (SLPPPVPNTPRPI). A Phosphoserine modification is found at serine 222. Pro residues-rich tracts occupy residues 234–243 (FPRPPLPPTP), 269–285 (VPPPPSQNSKPPVPSTP), and 293–309 (APPPPPPSRPGPPPLPP). Residue serine 324 is modified to Phosphoserine. The segment covering 328–355 (PTPPLPSPGRSGPLPPPPTERPPPPVRD) has biased composition (pro residues). A Phosphothreonine modification is found at threonine 329. At serine 334 the chain carries Phosphoserine. 3 XRSGPXPPXP motif repeats span residues 336 to 345 (GRSGPLPPPP), 358 to 367 (GRSGPLPPPP), and 394 to 403 (PRSGPRPPLP). Pro residues predominate over residues 397 to 418 (GPRPPLPPDRPGAGAPPPPPPS). The segment covering 419–428 (TSVRNGFQDS) has biased composition (polar residues). Over residues 464 to 478 (ARSESRSGSNRRERG) the composition is skewed to basic and acidic residues.

The protein belongs to the verprolin family. Binds to WAS within the N-terminal region, at a site distinct from the CDC42-binding site. Binds profilin and actin. Interacts with DBNL. Binds to WASL. Interacts with DBNL. Interacts with FNBP1L (via the SH3 domain). As to expression, isoforms were differentially expressed. One isoform was ubiquitously expressed, another was muscle-specific and another was expressed in the liver, heart and testis.

The protein resides in the cytoplasmic vesicle. Its subcellular location is the cytoplasm. It is found in the cytoskeleton. It localises to the cell projection. The protein localises to the ruffle. Functionally, plays a role in the reorganization of the actin cytoskeleton. Contributes with NCK1 and GRB2 in the recruitment and activation of WASL. Plays a role in the formation of cell ruffles. May participate in regulating the subcellular localization of WASL, resulting in the disassembly of stress fibers in favor of filopodia formation. The protein is WAS/WASL-interacting protein family member 1 (Wipf1) of Rattus norvegicus (Rat).